Reading from the N-terminus, the 188-residue chain is Adenine phosphoribosyltransferase (188 aa).

Belongs to the purine/pyrimidine phosphoribosyltransferase family. In terms of assembly, homodimer.

It is found in the cytoplasm. The catalysed reaction is AMP + diphosphate = 5-phospho-alpha-D-ribose 1-diphosphate + adenine. The protein operates within purine metabolism; AMP biosynthesis via salvage pathway; AMP from adenine: step 1/1. Functionally, catalyzes a salvage reaction resulting in the formation of AMP, that is energically less costly than de novo synthesis. In Burkholderia lata (strain ATCC 17760 / DSM 23089 / LMG 22485 / NCIMB 9086 / R18194 / 383), this protein is Adenine phosphoribosyltransferase.